The following is a 562-amino-acid chain: Arginine--tRNA ligase (562 aa).

The 'HIGH' region signature appears at 130-140 (ANPTGPLHIGH).

It belongs to the class-I aminoacyl-tRNA synthetase family. In terms of assembly, monomer.

Its subcellular location is the cytoplasm. It catalyses the reaction tRNA(Arg) + L-arginine + ATP = L-arginyl-tRNA(Arg) + AMP + diphosphate. This Geobacter metallireducens (strain ATCC 53774 / DSM 7210 / GS-15) protein is Arginine--tRNA ligase.